A 409-amino-acid polypeptide reads, in one-letter code: 5-aminolevulinate synthase (409 aa).

Residues arginine 21 and serine 136 each coordinate substrate. Pyridoxal 5'-phosphate-binding residues include serine 188, histidine 216, and threonine 244. Lysine 247 is an active-site residue. Lysine 247 bears the N6-(pyridoxal phosphate)lysine mark. Pyridoxal 5'-phosphate-binding residues include threonine 276 and threonine 277. Threonine 362 lines the substrate pocket.

It belongs to the class-II pyridoxal-phosphate-dependent aminotransferase family. In terms of assembly, homodimer. It depends on pyridoxal 5'-phosphate as a cofactor.

The catalysed reaction is succinyl-CoA + glycine + H(+) = 5-aminolevulinate + CO2 + CoA. Its pathway is porphyrin-containing compound metabolism; protoporphyrin-IX biosynthesis; 5-aminolevulinate from glycine: step 1/1. This Bradyrhizobium diazoefficiens (strain JCM 10833 / BCRC 13528 / IAM 13628 / NBRC 14792 / USDA 110) protein is 5-aminolevulinate synthase (hemA).